A 251-amino-acid polypeptide reads, in one-letter code: MRTPFIAGNWKMNKNPKETQEFLDGVKGKLPDASKVETVIGAPAIDLTTLVAGAEGTPLKTAAENCYFEDEGAFTGETSPKALKEMNVDYVIIGHSERRGYFHETDEDINKKAKAIFKNNLLPIICCGESLAQREAGQTEDWVASQIEAALAGLSADQVKVSVLAYEPIWAIGTGKTATADQAQEVVAHIRATVEKLYNKDTADAVRILYGGSVKPANVKELMAKPDIDGGLVGGASMDPESFIALANYQD.

9–11 contributes to the substrate binding site; the sequence is NWK. Histidine 95 serves as the catalytic Electrophile. Glutamate 167 serves as the catalytic Proton acceptor. Substrate is bound by residues glycine 173, serine 213, and 234–235; that span reads GG.

The protein belongs to the triosephosphate isomerase family. As to quaternary structure, homodimer.

Its subcellular location is the cytoplasm. The catalysed reaction is D-glyceraldehyde 3-phosphate = dihydroxyacetone phosphate. It participates in carbohydrate biosynthesis; gluconeogenesis. Its pathway is carbohydrate degradation; glycolysis; D-glyceraldehyde 3-phosphate from glycerone phosphate: step 1/1. Involved in the gluconeogenesis. Catalyzes stereospecifically the conversion of dihydroxyacetone phosphate (DHAP) to D-glyceraldehyde-3-phosphate (G3P). In Lacticaseibacillus casei (strain BL23) (Lactobacillus casei), this protein is Triosephosphate isomerase.